A 334-amino-acid chain; its full sequence is Glyceraldehyde-3-phosphate dehydrogenase (334 aa).

Residues 10–11 (RI), Asp33, Lys77, and Thr119 each bind NAD(+). Residues 149–151 (SCT), Thr180, 209–210 (TG), and Arg232 contribute to the D-glyceraldehyde 3-phosphate site. Cys150 serves as the catalytic Nucleophile. Asn314 contacts NAD(+).

The protein belongs to the glyceraldehyde-3-phosphate dehydrogenase family. In terms of assembly, homotetramer.

The protein resides in the cytoplasm. The enzyme catalyses D-glyceraldehyde 3-phosphate + phosphate + NAD(+) = (2R)-3-phospho-glyceroyl phosphate + NADH + H(+). The protein operates within carbohydrate degradation; glycolysis; pyruvate from D-glyceraldehyde 3-phosphate: step 1/5. Catalyzes the oxidative phosphorylation of glyceraldehyde 3-phosphate (G3P) to 1,3-bisphosphoglycerate (BPG) using the cofactor NAD. The first reaction step involves the formation of a hemiacetal intermediate between G3P and a cysteine residue, and this hemiacetal intermediate is then oxidized to a thioester, with concomitant reduction of NAD to NADH. The reduced NADH is then exchanged with the second NAD, and the thioester is attacked by a nucleophilic inorganic phosphate to produce BPG. This Chlamydia trachomatis serovar L2 (strain ATCC VR-902B / DSM 19102 / 434/Bu) protein is Glyceraldehyde-3-phosphate dehydrogenase (gap).